We begin with the raw amino-acid sequence, 367 residues long: MNTFGQQTSNPHAQDLLDMAKYYDHFNHYHQQQNQQLPQRPAAPPAPGYGLNEFSPPTANPYLWLNGPAINSSPYLNGGSGSPYFPTGYGGGQRQFLPPSSGFGVADFPWLSIPNQADLLKMVRPPYSYSSLIAMSIQNTPDKKLTLSQIYNYVAENFPFYKKSKAGWQNSIRHNLSLNDCFKKVARDDNDPGKGNYWTLDPNCEKMFDNGNFRRKRKRKSEIVGAGFDEESNEDKKPLALKSLGPDSPGGASVVLEQSSYTAPEGKNKSPVGSVARDSSHCFTNFASNMNALINGRAPRQFSAGHGDFSNSRHYLAELASCPISSPPISEAQTKVACYPSKQQNSLCTSVLNPFSLNHVYSREGEV.

Over residues glutamine 31–arginine 40 the composition is skewed to low complexity. Positions glutamine 31–leucine 51 are disordered. The fork-head DNA-binding region spans arginine 124–lysine 218. The tract at residues valine 224 to valine 254 is disordered.

Its subcellular location is the nucleus. Its function is as follows. Possible transcriptional activator. In Xenopus laevis (African clawed frog), this protein is Forkhead box protein I2-B (foxi2-b).